The primary structure comprises 665 residues: SH3 domain-containing kinase-binding protein 1 (665 aa).

SH3 domains are found at residues 1 to 58 (MVEA…EIKK) and 98 to 157 (RRRR…ELSG). Ser-156, Ser-159, Ser-183, and Ser-230 each carry phosphoserine. The tract at residues 159–200 (SDELGISQDEQLSKSSLRETTGSESDGGDSSSTKSEGANGTV) is disordered. The span at 177–195 (ETTGSESDGGDSSSTKSEG) shows a compositional bias: low complexity. A Phosphothreonine modification is found at Thr-254. Residues 267–328 (KSKDYCKVIF…PDNFVKLLPP (62 aa)) form the SH3 3 domain. Disordered regions lie at residues 328-444 (PDFE…LAGS) and 467-610 (DSVV…AAVE). Basic and acidic residues predominate over residues 355–390 (TERKHEIKKIPPERPEMLPNRTEEKERPEREPKLDL). At Ser-436 the chain carries Phosphoserine. Residues 469–484 (VVSSTEKLSHPTTSRP) are compositionally biased toward polar residues. A compositionally biased stretch (low complexity) spans 491–510 (PPSQSLTSSSLSSPDIFDSP). Phosphoserine is present on residues Ser-509, Ser-511, and Ser-521. Over residues 517–531 (EEHISLAHRGVDASK) the composition is skewed to basic and acidic residues. Positions 535-546 (KTVTISQVSDNK) are enriched in polar residues. A compositionally biased stretch (low complexity) spans 564–582 (APLSSAAPSPLSSSLGTAG). Ser-587 is subject to Phosphoserine. A coiled-coil region spans residues 602 to 664 (AASSQAAVEE…VNDIKKALQS (63 aa)).

As to quaternary structure, can self-associate and form homotetramers. Interacts with CD2, F-actin capping protein, PIK3R3, GRB2, EGFR, MET, BLNK, MAP3K4, PDCD6IP, SPRY2, ARHGAP17, ARHGAP27, MAGI2, CRK, BCAR1, SOS1, ASAP1, ARAP3, HIP1R, SYNJ2, INPP5D and STAP1. Interacts with E3 ubiquitin-protein ligases CBL and CBLB, but does not interact with CBLC. Two molecules of SH3KBP1 seem to bind through their respective SH3 1 domain to one molecule of CBLB. The interaction with CBL or CBLB and EGFR is increased upon EGF stimulation. The interaction with CBL is attenuated by PDCD6IP. Interacts (via SH3 domains) with ARAP1. The interaction is independent of EGF and does not affect ARAP1 GTPase-activating activity but is involved in regulating ubiquitination and endocytic trafficking of EGFR. ARAP1 competes with CBL for binding to SH3KBP1 and prevents interaction of CBL with SH3KBP1; this is likely to regulate SH3KBP1-mediated internalization of EGFR. Interacts through its proline-rich region with the SH3 domain of endophilins SH3GL1, SH3GL2 and SH3GL3. The SH3KBP1-endophilin complex seems to associate with a complex containing the phosphorylated receptor (EGFR or MET) and phosphorylated CBL. Probably associates with ASAP1 and phosphorylated EGFR. Probably part of a complex consisting of at least SH3KBP1, ASAP1 and ARAP3. Interacts with focal adhesion kinases PTK2/FAK1 and PTK2B/PYK2, probably as a dimer. Interacts with DAB2 and probably associates with chathrin through its interaction with DAB2. Part of a complex consisting of SH3KBP1, DAB2, and clathrin heavy chain. DAB2 and clathrin dissociate from SH3KBP1 following growth factor treatment, enabling interaction with CBL. Interacts with DDN and probably associates with MAGI2 through its interaction with DDN. Interacts with the SH3 domains of SRC tyrosine-protein kinases SRC, LCK, LYN, FGR, FYN and HCK. Interacts with TRADD, BIRC2, TRAF1, TRAF2 and TNFR1, and the association with a TNFR1-associated complex upon stimulation with TNF-alpha seems to be mediated by SRC. Interacts (via SH3 domains) with SHKBP1 (via PXXXPR motifs). Interaction with CBL is abolished in the presence of SHKBP1. Interacts (via SH3 domains) with ZFP36 (via extreme C-terminal region). Interacts with MAP3K4; this interaction enhances the association with ZFP36. (Microbial infection) Interacts (via SH3 domains) with Chikungunya virus non-structural protein 3 (via C-terminus); this interaction plays a role in initiation of viral replication. In terms of processing, monoubiquitinated by CBL and CBLB after EGF stimulation; probably on its C-terminus. In terms of tissue distribution, ubiquitously expressed. Also expressed in some cancer cell lines.

The protein resides in the cytoplasm. Its subcellular location is the cytoskeleton. It localises to the cytoplasmic vesicle membrane. It is found in the synapse. The protein localises to the synaptosome. The protein resides in the cell junction. Its subcellular location is the focal adhesion. Functionally, adapter protein involved in regulating diverse signal transduction pathways. Involved in the regulation of endocytosis and lysosomal degradation of ligand-induced receptor tyrosine kinases, including EGFR and MET/hepatocyte growth factor receptor, through an association with CBL and endophilins. The association with CBL, and thus the receptor internalization, may be inhibited by an interaction with PDCD6IP and/or SPRY2. Involved in regulation of ligand-dependent endocytosis of the IgE receptor. Attenuates phosphatidylinositol 3-kinase activity by interaction with its regulatory subunit. May be involved in regulation of cell adhesion; promotes the interaction between TTK2B and PDCD6IP. May be involved in the regulation of cellular stress response via the MAPK pathways through its interaction with MAP3K4. Is involved in modulation of tumor necrosis factor mediated apoptosis. Plays a role in the regulation of cell morphology and cytoskeletal organization. Required in the control of cell shape and migration. Has an essential role in the stimulation of B cell activation. This is SH3 domain-containing kinase-binding protein 1 (SH3KBP1) from Homo sapiens (Human).